The primary structure comprises 181 residues: Oligoribonuclease (181 aa).

The 164-residue stretch at L8–L171 folds into the Exonuclease domain. Y129 is a catalytic residue.

It belongs to the oligoribonuclease family.

The protein localises to the cytoplasm. In terms of biological role, 3'-to-5' exoribonuclease specific for small oligoribonucleotides. The protein is Oligoribonuclease of Pseudoalteromonas atlantica (strain T6c / ATCC BAA-1087).